The chain runs to 317 residues: Ribose-phosphate pyrophosphokinase (317 aa).

Residues 43–45 and 102–103 contribute to the ATP site; these read DGE and RQ. Residues His-136 and Asp-175 each coordinate Mg(2+). Lys-198 is an active-site residue. D-ribose 5-phosphate contacts are provided by residues Arg-200, Asp-224, and 228–232; that span reads DTAGT.

Belongs to the ribose-phosphate pyrophosphokinase family. Class I subfamily. Homohexamer. Mg(2+) is required as a cofactor.

Its subcellular location is the cytoplasm. The enzyme catalyses D-ribose 5-phosphate + ATP = 5-phospho-alpha-D-ribose 1-diphosphate + AMP + H(+). It functions in the pathway metabolic intermediate biosynthesis; 5-phospho-alpha-D-ribose 1-diphosphate biosynthesis; 5-phospho-alpha-D-ribose 1-diphosphate from D-ribose 5-phosphate (route I): step 1/1. Involved in the biosynthesis of the central metabolite phospho-alpha-D-ribosyl-1-pyrophosphate (PRPP) via the transfer of pyrophosphoryl group from ATP to 1-hydroxyl of ribose-5-phosphate (Rib-5-P). The protein is Ribose-phosphate pyrophosphokinase of Corynebacterium ammoniagenes (Brevibacterium ammoniagenes).